The chain runs to 483 residues: UDP-N-acetylmuramoyl-L-alanyl-D-glutamate--2,6-diaminopimelate ligase (483 aa).

Ser-30 lines the UDP-N-acetyl-alpha-D-muramoyl-L-alanyl-D-glutamate pocket. 109 to 115 (GTNGKTT) is an ATP binding site. UDP-N-acetyl-alpha-D-muramoyl-L-alanyl-D-glutamate-binding positions include 151-152 (TT), Ser-178, and Arg-186. Lys-218 bears the N6-carboxylysine mark. Residues Arg-380, 403 to 406 (DNPR), Gly-453, and Glu-457 contribute to the meso-2,6-diaminopimelate site. The Meso-diaminopimelate recognition motif motif lies at 403–406 (DNPR).

The protein belongs to the MurCDEF family. MurE subfamily. Mg(2+) serves as cofactor. Post-translationally, carboxylation is probably crucial for Mg(2+) binding and, consequently, for the gamma-phosphate positioning of ATP.

It localises to the cytoplasm. The catalysed reaction is UDP-N-acetyl-alpha-D-muramoyl-L-alanyl-D-glutamate + meso-2,6-diaminopimelate + ATP = UDP-N-acetyl-alpha-D-muramoyl-L-alanyl-gamma-D-glutamyl-meso-2,6-diaminopimelate + ADP + phosphate + H(+). Its pathway is cell wall biogenesis; peptidoglycan biosynthesis. Its function is as follows. Catalyzes the addition of meso-diaminopimelic acid to the nucleotide precursor UDP-N-acetylmuramoyl-L-alanyl-D-glutamate (UMAG) in the biosynthesis of bacterial cell-wall peptidoglycan. The protein is UDP-N-acetylmuramoyl-L-alanyl-D-glutamate--2,6-diaminopimelate ligase of Chlamydia pneumoniae (Chlamydophila pneumoniae).